Consider the following 673-residue polypeptide: Polyunsaturated fatty acid 5-lipoxygenase (673 aa).

Positions Pro-2–Lys-117 constitute a PLAT domain. Residues Gly-17, Thr-18, Asp-19, Asn-44, Asp-45, Glu-47, Asp-79, and Asp-80 each coordinate Ca(2+). One can recognise a Lipoxygenase domain in the interval Leu-118 to Ile-673. Ser-271 bears the Phosphoserine mark. His-367 and His-372 together coordinate Fe cation. Ser-523 carries the phosphoserine modification. Fe cation contacts are provided by His-550, Asn-554, and Ile-673.

Belongs to the lipoxygenase family. Homodimer. Interacts with ALOX5AP and LTC4S. Interacts with COTL1, the interaction is required for stability and efficient catalytic activity. Interacts with PIK3R1; this interaction bridges ALOX5 with CD40 after CD40 ligation in B cells and leads to the production of reactive oxygen species (ROS). Interacts (via PLAT domain) with DICER1 (via Dicer dsRNA-binding fold domain); this interaction enhances arachidonate 5-lipoxygenase activity and modifies the miRNA precursor processing activity of DICER1. It depends on Fe cation as a cofactor. In terms of processing, serine phosphorylation by MAPKAPK2 is stimulated by arachidonic acid. Phosphorylation on Ser-523 by PKA has an inhibitory effect. Phosphorylation on Ser-271 prevents export from the nucleus. Phosphorylation at Ser-523 is stimulated by 8-bromo-3',5'-cyclic AMP or prostaglandin E2.

The protein resides in the cytoplasm. It is found in the nucleus matrix. It localises to the nucleus membrane. The protein localises to the perinuclear region. Its subcellular location is the cytosol. The protein resides in the nucleus envelope. It is found in the nucleus intermembrane space. The catalysed reaction is (5Z,8Z,11Z,14Z)-eicosatetraenoate + O2 = leukotriene A4 + H2O. It catalyses the reaction 18-HEPE + O2 = (5S)-hydroperoxy-18-hydroxy-(7E,9E,11Z,14Z,16E)-eicosapentaenoate. The enzyme catalyses (18R)-hydroxy-(5Z,8Z,11Z,14Z,16E)-eicosapentaenoate + O2 = (5S)-hydroperoxy-(18R)-hydroxy-(6E,8Z,11Z,14Z,16E)-eicosapentaenoate. It carries out the reaction (18S)-hydroxy-(5Z,8Z,11Z,14Z,16E)-eicosapentaenoate + O2 = (5S)-hydroperoxy-(18S)-hydroxy-(6E,8Z,11Z,14Z,16E)-eicosapentaenoate. The catalysed reaction is (5S)-hydroperoxy-(18S)-hydroxy-(6E,8Z,11Z,14Z,16E)-eicosapentaenoate = (5S,6S)-epoxy-(18S)-hydroxy-(7E,9E,11Z,14Z,16E)-eicosapentaenoate + H2O. It catalyses the reaction (5S)-hydroperoxy-(18R)-hydroxy-(6E,8Z,11Z,14Z,16E)-eicosapentaenoate = (5S,6S)-epoxy-(18R)-hydroxy-(7E,9E,11Z,14Z,16E)-eicosapentaenoate + H2O. The enzyme catalyses (5S)-hydroperoxy-18-hydroxy-(7E,9E,11Z,14Z,16E)-eicosapentaenoate = (5S,6S)-epoxy-18-hydroxy-(7E,9E,11Z,14Z,16E)-eicosapentaenoate + H2O. It carries out the reaction (5Z,8Z,11Z,14Z)-eicosatetraenoate + O2 = (5S)-hydroperoxy-(6E,8Z,11Z,14Z)-eicosatetraenoate. The catalysed reaction is (15S)-hydroxy-(5Z,8Z,11Z,13E)-eicosatetraenoate + O2 = (5S)-hydroperoxy-(15S)-hydroxy-(6E,8Z,11Z,13E)-eicosatetraenoate. It catalyses the reaction (5S)-hydroperoxy-(6E,8Z,11Z,14Z)-eicosatetraenoate = leukotriene A4 + H2O. The enzyme catalyses (5Z,8Z,11Z,14Z)-eicosatetraenoate + O2 = (8S)-hydroperoxy-(5Z,9E,11Z,14Z)-eicosatetraenoate. It carries out the reaction (5Z,8Z,11Z,14Z)-eicosatetraenoate + O2 = (12S)-hydroperoxy-(5Z,8Z,10E,14Z)-eicosatetraenoate. The catalysed reaction is (5Z,8Z)-eicosadienoate + O2 = (5S)-hydroperoxy-(6E,8Z)-eicosadienoate. It catalyses the reaction (12S)-hydroxy-(5Z,8Z,10E,14Z)-eicosatetraenoate + O2 = (5S)-hydroperoxy-(12S)-hydroxy-(6E,8Z,10E,14Z)-eicosatetraenoate. The enzyme catalyses (5Z,8Z,11Z,14Z,17Z)-eicosapentaenoate + O2 = 5-hydroperoxy-(6E,8Z,11Z,14Z,17Z)-eicosapentaenoate. It carries out the reaction (4Z,7Z,10Z,13Z,16Z,19Z)-docosahexaenoate + O2 = (14S)-hydroperoxy-(4Z,7Z,10Z,12E,16Z,19Z)-docosahexaenoate. The catalysed reaction is (4Z,7Z,10Z,13Z,16Z,19Z)-docosahexaenoate + O2 = (7S)-hydroperoxy-(4Z,8E,10Z,13Z,16Z,19Z)-docosahexaenoate. It catalyses the reaction (4Z,7Z,10Z,13Z,16Z,19Z)-docosahexaenoate + O2 = (17S)-hydroperoxy-(4Z,7Z,10Z,13Z,15E,19Z)-docosahexaenoate. It participates in lipid metabolism; leukotriene A4 biosynthesis. Its function is as follows. Catalyzes the oxygenation of arachidonate to 5-hydroperoxyeicosatetraenoate (5-HPETE) followed by the dehydration to 5,6- epoxyeicosatetraenoate (Leukotriene A4/LTA4), the first two steps in the biosynthesis of leukotrienes, which are potent mediators of inflammation. Also catalyzes the oxygenation of arachidonate into 8-hydroperoxyicosatetraenoate (8-HPETE) and 12-hydroperoxyicosatetraenoate (12-HPETE). Displays lipoxin synthase activity being able to convert (15S)-HETE into a conjugate tetraene. Although arachidonate is the preferred substrate, this enzyme can also metabolize oxidized fatty acids derived from arachidonate such as (15S)-HETE, eicosapentaenoate (EPA) such as (18R)- and (18S)-HEPE or docosahexaenoate (DHA) which lead to the formation of specialized pro-resolving mediators (SPM) lipoxin and resolvins E and D respectively, therefore it participates in anti-inflammatory responses. Oxidation of DHA directly inhibits endothelial cell proliferation and sprouting angiogenesis via peroxisome proliferator-activated receptor gamma (PPARgamma). It does not catalyze the oxygenation of linoleic acid and does not convert (5S)-HETE to lipoxin isomers. In addition to inflammatory processes, it participates in dendritic cell migration, wound healing through an antioxidant mechanism based on heme oxygenase-1 (HO-1) regulation expression, monocyte adhesion to the endothelium via ITGAM expression on monocytes. Moreover, it helps establish an adaptive humoral immunity by regulating primary resting B cells and follicular helper T cells and participates in the CD40-induced production of reactive oxygen species (ROS) after CD40 ligation in B cells through interaction with PIK3R1 that bridges ALOX5 with CD40. May also play a role in glucose homeostasis, regulation of insulin secretion and palmitic acid-induced insulin resistance via AMPK. Can regulate bone mineralization and fat cell differentiation increases in induced pluripotent stem cells. The sequence is that of Polyunsaturated fatty acid 5-lipoxygenase from Mesocricetus auratus (Golden hamster).